A 451-amino-acid chain; its full sequence is Medium-chain fatty acid ethyl ester synthase/esterase 2 (451 aa).

K114 is covalently cross-linked (Glycyl lysine isopeptide (Lys-Gly) (interchain with G-Cter in ubiquitin)). Residues 166–430 (PLVVILHGLA…GGHLAYLDKD (265 aa)) enclose the AB hydrolase-1 domain. Residues S247, D395, and H423 each act as charge relay system in the active site.

This sequence belongs to the AB hydrolase superfamily. AB hydrolase 4 family.

The catalysed reaction is an aliphatic alcohol + acetyl-CoA = an acetyl ester + CoA. Its function is as follows. Displays enzymatic activity both for medium-chain fatty acid (MCFA) ethyl ester synthesis and hydrolysis (esterase activity). MCFA are toxic for yeast and this enzyme could thus be involved in their detoxification by esterification. The sequence is that of Medium-chain fatty acid ethyl ester synthase/esterase 2 (EHT1) from Saccharomyces cerevisiae (strain ATCC 204508 / S288c) (Baker's yeast).